The following is a 472-amino-acid chain: Collagenase 3 (472 aa).

Positions 1-19 (MHPGVLAAFLFLSWTRCWS) are cleaved as a signal peptide. A propeptide spans 20 to 104 (LPVPNDDDDD…PRCGVPDVGE (85 aa)) (activation peptide). A Cysteine switch motif is present at residues 95–102 (PRCGVPDV). Zn(2+) is bound at residue Cys97. Asn118 is a glycosylation site (N-linked (GlcNAc...) asparagine). Residue Asp129 participates in Ca(2+) binding. Asn153 and Asn159 each carry an N-linked (GlcNAc...) asparagine glycan. Residue Asp163 coordinates Ca(2+). Residues His173 and Asp175 each coordinate Zn(2+). Positions 177 to 247 (YPFDGPSGLL…GALMFPIYTY (71 aa)) are interaction with TIMP2. The Ca(2+) site is built by Asp180, Gly181, Ser183, and Leu185. Position 188 (His188) interacts with Zn(2+). Positions 195, 197, and 199 each coordinate Ca(2+). His201 contacts Zn(2+). Ca(2+)-binding residues include Asp203, Asp204, and Glu206. His223 is a binding site for Zn(2+). Residue Glu224 is part of the active site. Zn(2+)-binding residues include His227, His233, and Met241. The interval 269 to 472 (PGDEDPNPKH…VMPTNSLLWC (204 aa)) is interaction with collagen. Hemopexin repeat units follow at residues 282-331 (PDKC…WPEL), 332-378 (PNRI…GFPK), 380-428 (VKKI…FPGI), and 429-472 (GDKV…LLWC). An intrachain disulfide couples Cys285 to Cys472. Ca(2+) is bound by residues Asp292, Ile294, Asp336, and Ala338. Tyr367 is modified (phosphotyrosine; by PKDCC). Residues Ser384, Ala386, Asp433, and Val435 each contribute to the Ca(2+) site.

Belongs to the peptidase M10A family. The cofactor is Ca(2+). It depends on Zn(2+) as a cofactor. In terms of processing, the proenzyme is activated by removal of the propeptide; this cleavage can be effected by other matrix metalloproteinases, such as MMP2, MMP3 and MMP14 and may involve several cleavage steps. Cleavage can also be autocatalytic, after partial maturation by another protease or after treatment with 4-aminophenylmercuric acetate (APMA) (in vitro). Post-translationally, N-glycosylated. Tyrosine phosphorylated by PKDCC/VLK. In terms of tissue distribution, seems to be specific to breast carcinomas.

The protein localises to the secreted. It is found in the extracellular space. Its subcellular location is the extracellular matrix. In terms of biological role, plays a role in the degradation of extracellular matrix proteins including fibrillar collagen, fibronectin, TNC and ACAN. Cleaves triple helical collagens, including type I, type II and type III collagen, but has the highest activity with soluble type II collagen. Can also degrade collagen type IV, type XIV and type X. May also function by activating or degrading key regulatory proteins, such as TGFB1 and CCN2. Plays a role in wound healing, tissue remodeling, cartilage degradation, bone development, bone mineralization and ossification. Required for normal embryonic bone development and ossification. Plays a role in the healing of bone fractures via endochondral ossification. Plays a role in wound healing, probably by a mechanism that involves proteolytic activation of TGFB1 and degradation of CCN2. Plays a role in keratinocyte migration during wound healing. May play a role in cell migration and in tumor cell invasion. The polypeptide is Collagenase 3 (MMP13) (Equus caballus (Horse)).